Here is a 233-residue protein sequence, read N- to C-terminus: Ribosome maturation factor RimP (233 aa).

The span at 167–179 (RGKAAEREKKRDL) shows a compositional bias: basic and acidic residues. A disordered region spans residues 167-233 (RGKAAEREKK…RARRGEIDPD (67 aa)). Low complexity predominate over residues 187–196 (PHAKPAAQAK). Residues 220–233 (LAADRARRGEIDPD) are compositionally biased toward basic and acidic residues.

This sequence belongs to the RimP family.

The protein localises to the cytoplasm. In terms of biological role, required for maturation of 30S ribosomal subunits. This chain is Ribosome maturation factor RimP, found in Bradyrhizobium sp. (strain ORS 278).